A 311-amino-acid polypeptide reads, in one-letter code: Olfactory receptor 10G8 (311 aa).

Over 1 to 23 (MSNASLLTAFILMGLPHAPALDA) the chain is Extracellular. Asparagine 3 carries N-linked (GlcNAc...) asparagine glycosylation. Residues 24 to 44 (PLFGVFLVVYVLTVLGNLLIL) traverse the membrane as a helical segment. Residues 45 to 52 (LVIRVDSH) lie on the Cytoplasmic side of the membrane. The chain crosses the membrane as a helical span at residues 53–73 (LHTTMYYFLTNLSFIDMWFST). The Extracellular portion of the chain corresponds to 74 to 98 (VTVPKLLMTLVFPSGRAISFHSCMA). Cysteines 96 and 188 form a disulfide. A helical membrane pass occupies residues 99–119 (QLYFFHFLGGTECFLYRVMSC). The Cytoplasmic portion of the chain corresponds to 120–138 (DRYLAISYPLRYTSMMTGR). Residues 139–159 (SCTLLATSTWLSGSLHSAVQA) form a helical membrane-spanning segment. Topologically, residues 160 to 196 (ILTFHLPYCGPNWIQHYLCDAPPILKLACADTSAIET) are extracellular. The helical transmembrane segment at 197–216 (VIFVTVGIVASGCFVLIVLS) threads the bilayer. Residues 217–236 (YVSIVCSILRIRTSEGKHRA) are Cytoplasmic-facing. A helical membrane pass occupies residues 237–257 (FQTCASHCIVVLCFFGPGLFI). The Extracellular portion of the chain corresponds to 258 to 268 (YLRPGSRKAVD). The chain crosses the membrane as a helical span at residues 269–289 (GVVAVFYTVLTPLLNPVVYTL). Topologically, residues 290-311 (RNKEVKKALLKLKDKVAHSQSK) are cytoplasmic.

It belongs to the G-protein coupled receptor 1 family.

The protein localises to the cell membrane. Its function is as follows. Odorant receptor. This chain is Olfactory receptor 10G8 (OR10G8), found in Homo sapiens (Human).